The chain runs to 1070 residues: uncharacterized protein (1070 aa).

The region spanning 477–523 (LIDTNQLLLRQLQQIVKLGIFNEKKIKEELKANKFNEQVALQILESE) is the UBA domain.

This is an uncharacterized protein from Sulfolobus islandicus rod-shaped virus 1 (SIRV-1).